The chain runs to 302 residues: Glutaminase (302 aa).

Residues Ser61, Asn111, Glu155, Asn162, Tyr186, Tyr238, and Val256 each coordinate substrate.

This sequence belongs to the glutaminase family. Homotetramer.

It carries out the reaction L-glutamine + H2O = L-glutamate + NH4(+). The protein is Glutaminase of Pseudomonas syringae pv. tomato (strain ATCC BAA-871 / DC3000).